We begin with the raw amino-acid sequence, 316 residues long: Acetyl-coenzyme A carboxylase carboxyl transferase subunit beta (316 aa).

The region spanning 39-308 (LWHKCSKCGV…TPPMVLWETM (270 aa)) is the CoA carboxyltransferase N-terminal domain. Zn(2+)-binding residues include C43, C46, C62, and C65. The C4-type zinc finger occupies 43–65 (CSKCGVLTYTKDLRANQMVCVEC).

This sequence belongs to the AccD/PCCB family. As to quaternary structure, acetyl-CoA carboxylase is a heterohexamer composed of biotin carboxyl carrier protein (AccB), biotin carboxylase (AccC) and two subunits each of ACCase subunit alpha (AccA) and ACCase subunit beta (AccD). It depends on Zn(2+) as a cofactor.

It localises to the cytoplasm. It carries out the reaction N(6)-carboxybiotinyl-L-lysyl-[protein] + acetyl-CoA = N(6)-biotinyl-L-lysyl-[protein] + malonyl-CoA. The protein operates within lipid metabolism; malonyl-CoA biosynthesis; malonyl-CoA from acetyl-CoA: step 1/1. In terms of biological role, component of the acetyl coenzyme A carboxylase (ACC) complex. Biotin carboxylase (BC) catalyzes the carboxylation of biotin on its carrier protein (BCCP) and then the CO(2) group is transferred by the transcarboxylase to acetyl-CoA to form malonyl-CoA. The protein is Acetyl-coenzyme A carboxylase carboxyl transferase subunit beta of Trichormus variabilis (strain ATCC 29413 / PCC 7937) (Anabaena variabilis).